Here is an 88-residue protein sequence, read N- to C-terminus: MANSKTAKKRAIQSEKRRQHNASRRSMLRTYVKKVIAAIKTGDHKAATEAFAVAQPIVDRMATKGLIHKNKAARQKARLNARIKALAA.

The tract at residues 1-27 (MANSKTAKKRAIQSEKRRQHNASRRSM) is disordered.

This sequence belongs to the bacterial ribosomal protein bS20 family.

In terms of biological role, binds directly to 16S ribosomal RNA. This Shewanella amazonensis (strain ATCC BAA-1098 / SB2B) protein is Small ribosomal subunit protein bS20.